The chain runs to 471 residues: 6-phosphofructo-2-kinase/fructose-2,6-bisphosphatase 1 (471 aa).

S2 carries the post-translational modification N-acetylserine. Residues 2–250 (SREMGELTQT…AYYLMNIHVT (249 aa)) are 6-phosphofructo-2-kinase. Phosphoserine; by PKA is present on S33. 49–57 (GLPARGKTY) contacts ATP. Beta-D-fructose 6-phosphate-binding residues include R82 and R105. D131 is an active-site residue. Positions 133 and 139 each coordinate beta-D-fructose 6-phosphate. Phosphoserine is present on S141. C161 is an active-site residue. An ATP-binding site is contributed by 170–175 (NIKQVK). 3 residues coordinate beta-D-fructose 6-phosphate: K175, R196, and Y200. The segment at 251–471 (PRSIYLCRHG…EALDTVPAHY (221 aa)) is fructose-2,6-bisphosphatase. Position 258 (R258) interacts with beta-D-fructose 2,6-bisphosphate. Catalysis depends on H259, which acts as the Tele-phosphohistidine intermediate. Residues N265, G271, and R308 each contribute to the beta-D-fructose 2,6-bisphosphate site. The Proton donor/acceptor role is filled by E328. Beta-D-fructose 2,6-bisphosphate-binding residues include Y339, R353, K357, Y368, Q394, and R398. Residue 350 to 353 (FALR) participates in ATP binding. ATP contacts are provided by residues 394–398 (QAVMR) and Y430.

This sequence in the C-terminal section; belongs to the phosphoglycerate mutase family. Homodimer. Liver.

The catalysed reaction is beta-D-fructose 2,6-bisphosphate + H2O = beta-D-fructose 6-phosphate + phosphate. It carries out the reaction beta-D-fructose 6-phosphate + ATP = beta-D-fructose 2,6-bisphosphate + ADP + H(+). Phosphorylation at Ser-33 inhibits the kinase and activates the bisphosphatase. Synthesis and degradation of fructose 2,6-bisphosphate. This is 6-phosphofructo-2-kinase/fructose-2,6-bisphosphatase 1 from Mus musculus (Mouse).